The chain runs to 283 residues: MAAAPQAPGRGSLRKTRPLVVKTSLNNPYIIRWSALESEDMHFILQTLEDRLKAIGLQKIEDKKKKNKTPFLKKESREKCSIAVDISENLKEKKTDAKQQVSGWTPAHVRKQLAIGVNEVTRALERRELLLVLVCKSVKPAMITSHLIQLSLSRSVPACQVPRLSERIAPVIGLKCVLALAFKKNTTDFVDEVRAIIPRVPSLSVPWLQDRIEDSGENLETEPLESQDRELLDTSFEDLSKPKRKLADGRQASVTLQPLKIKKLIPNPNKIRKPPKSKKATPK.

N-acetylalanine is present on alanine 2. Residues serine 12, serine 226, and serine 235 each carry the phosphoserine modification.

This sequence belongs to the eukaryotic ribosomal protein eL8 family. In terms of assembly, component of nuclear RNase P and RNase MRP ribonucleoproteins. RNase P consists of a catalytic RNA moiety and about 10 protein subunits; POP1, POP4, POP5, POP7, RPP14, RPP21, RPP25, RPP30, RPP38 and RPP40. Within the RNase P complex, POP1, POP7 and RPP25 form the 'finger' subcomplex, POP5, RPP14, RPP40 and homodimeric RPP30 form the 'palm' subcomplex, and RPP21, POP4 and RPP38 form the 'wrist' subcomplex. All subunits of the RNase P complex interact with the catalytic RNA. Several subunits of RNase P are also part of the RNase MRP complex. RNase MRP consists of a catalytic RNA moiety and about 8 protein subunits; POP1, POP7, RPP25, RPP30, RPP38, RPP40 and possibly also POP4 and POP5.

Its subcellular location is the nucleus. The protein localises to the nucleolus. Functionally, component of ribonuclease P, a ribonucleoprotein complex that generates mature tRNA molecules by cleaving their 5'-ends. Also a component of the MRP ribonuclease complex, which cleaves pre-rRNA sequences. The protein is Ribonuclease P protein subunit p38 (RPP38) of Homo sapiens (Human).